We begin with the raw amino-acid sequence, 681 residues long: Serine/threonine-protein kinase PAK 6 (681 aa).

Disordered stretches follow at residues 1-30 (MFRK…DPKE), 200-256 (QSSP…ESSL), and 268-355 (TAAT…PRTW). Residues 12–25 (ISAPQNFQHRVHTS) enclose the CRIB domain. Positions 26 to 406 (FDPKEGKFVG…VVDQGDPRLL (381 aa)) are linker. Composition is skewed to low complexity over residues 201–212 (SSPPGASPPTGT) and 268–278 (TAATAPPSSSK). The span at 308–333 (SLPSDQPVGTFSPLTTSDTSSPQKSL) shows a compositional bias: polar residues. The region spanning 407 to 658 (LDSYVKIGEG…AQELLDHPFL (252 aa)) is the Protein kinase domain. Residues 413 to 421 (IGEGSTGIV) and Lys436 contribute to the ATP site. Catalysis depends on Asp526, which acts as the Proton acceptor. At Ser560 the chain carries Phosphoserine; by autocatalysis.

It belongs to the protein kinase superfamily. STE Ser/Thr protein kinase family. STE20 subfamily. As to quaternary structure, interacts tightly with GTP-bound but not GDP-bound CDC42/p21 and RAC1. Interacts with the androgen receptor AR. Interacts with IQGAP1 and PPM1B. In terms of processing, autophosphorylated. Phosphorylated by MAP2K6/MAPKK6, leading to PAK6 activation.

The protein localises to the cytoplasm. It localises to the nucleus. The catalysed reaction is L-seryl-[protein] + ATP = O-phospho-L-seryl-[protein] + ADP + H(+). The enzyme catalyses L-threonyl-[protein] + ATP = O-phospho-L-threonyl-[protein] + ADP + H(+). In terms of biological role, serine/threonine protein kinase that plays a role in the regulation of gene transcription. The kinase activity is induced by various effectors including AR or MAP2K6/MAPKK6. Phosphorylates the DNA-binding domain of androgen receptor/AR and thereby inhibits AR-mediated transcription. Also inhibits ESR1-mediated transcription. May play a role in cytoskeleton regulation by interacting with IQGAP1. May protect cells from apoptosis through phosphorylation of BAD. The polypeptide is Serine/threonine-protein kinase PAK 6 (PAK6) (Pongo abelii (Sumatran orangutan)).